The sequence spans 201 residues: Probable GTP-binding protein EngB (201 aa).

In terms of domain architecture, EngB-type G spans 22–197 (TFPEYAFIGR…LNYIESINKE (176 aa)). GTP is bound by residues 30–37 (GRSNVGKS), 57–61 (GKTML), 75–78 (DLPG), 142–145 (TKAD), and 175–178 (ITSS). Mg(2+) contacts are provided by Ser-37 and Thr-59.

The protein belongs to the TRAFAC class TrmE-Era-EngA-EngB-Septin-like GTPase superfamily. EngB GTPase family. It depends on Mg(2+) as a cofactor.

Necessary for normal cell division and for the maintenance of normal septation. This chain is Probable GTP-binding protein EngB, found in Bacteroides fragilis (strain YCH46).